We begin with the raw amino-acid sequence, 489 residues long: Adenylosuccinate synthetase 2, chloroplastic (489 aa).

Residues 1–45 (MPFSPPCLDPAAAAAASLSFLPAAAARPPAPCAVAPRSRRALRVA) constitute a chloroplast transit peptide. GTP-binding positions include 76–82 (GDEGKGK) and 104–106 (GHT). Asp77 acts as the Proton acceptor in catalysis. Mg(2+) is bound by residues Asp77 and Gly104. IMP contacts are provided by residues 77–80 (DEGK), 102–105 (NAGH), Thr194, Arg208, Gln288, Thr303, and Arg367. Catalysis depends on His105, which acts as the Proton donor. 363 to 369 (TTTGRPR) provides a ligand contact to substrate. Residues Arg369, 395–397 (KLD), and 478–480 (GVG) contribute to the GTP site.

This sequence belongs to the adenylosuccinate synthetase family. In terms of assembly, homodimer. Mg(2+) is required as a cofactor.

It is found in the plastid. The protein localises to the chloroplast. The catalysed reaction is IMP + L-aspartate + GTP = N(6)-(1,2-dicarboxyethyl)-AMP + GDP + phosphate + 2 H(+). It participates in purine metabolism; AMP biosynthesis via de novo pathway; AMP from IMP: step 1/2. Functionally, plays an important role in the de novo pathway and in the salvage pathway of purine nucleotide biosynthesis. Catalyzes the first committed step in the biosynthesis of AMP from IMP. This is Adenylosuccinate synthetase 2, chloroplastic from Oryza sativa subsp. japonica (Rice).